We begin with the raw amino-acid sequence, 67 residues long: Large ribosomal subunit protein bL35 (67 aa).

This sequence belongs to the bacterial ribosomal protein bL35 family.

This chain is Large ribosomal subunit protein bL35, found in Sinorhizobium medicae (strain WSM419) (Ensifer medicae).